Consider the following 70-residue polypeptide: Large ribosomal subunit protein eL38 (70 aa).

The protein belongs to the eukaryotic ribosomal protein eL38 family.

The polypeptide is Large ribosomal subunit protein eL38 (RpL38) (Lonomia obliqua (Moth)).